A 130-amino-acid polypeptide reads, in one-letter code: Small ribosomal subunit protein uS9 (130 aa).

Residues 105-130 (TRDPRMKERKKYGLHKARKAPQYSKR) are disordered. The span at 111 to 130 (KERKKYGLHKARKAPQYSKR) shows a compositional bias: basic residues.

The protein belongs to the universal ribosomal protein uS9 family.

This is Small ribosomal subunit protein uS9 from Syntrophomonas wolfei subsp. wolfei (strain DSM 2245B / Goettingen).